We begin with the raw amino-acid sequence, 277 residues long: Large ribosomal subunit protein uL2 (277 aa).

The tract at residues 227–277 (VMNPVDHPHGGGEGRTSGGRHPVTPWGVPTKGKKTRSKTKASDRLIMRRRK) is disordered. The span at 266–277 (KASDRLIMRRRK) shows a compositional bias: basic and acidic residues.

It belongs to the universal ribosomal protein uL2 family. In terms of assembly, part of the 50S ribosomal subunit. Forms a bridge to the 30S subunit in the 70S ribosome.

Functionally, one of the primary rRNA binding proteins. Required for association of the 30S and 50S subunits to form the 70S ribosome, for tRNA binding and peptide bond formation. It has been suggested to have peptidyltransferase activity; this is somewhat controversial. Makes several contacts with the 16S rRNA in the 70S ribosome. The chain is Large ribosomal subunit protein uL2 from Magnetococcus marinus (strain ATCC BAA-1437 / JCM 17883 / MC-1).